A 180-amino-acid chain; its full sequence is Large ribosomal subunit protein eL20 (180 aa).

Belongs to the eukaryotic ribosomal protein eL20 family.

In Caenorhabditis elegans, this protein is Large ribosomal subunit protein eL20.